The following is a 253-amino-acid chain: MCVVYRTSVLILLASGCSGVFDTPEDSKETQIKKSFAKTLDMYPIKNLEDLYDKEGYRDGEFKKGDKGTWVVRSEMIIQPKGKSLTSRGMILYMNRNTRTTTGYFSIEEIDSRKSLDERETEKKYPVKMINNKIIPTEEIKDEKLKKEIENFKFFVQYGSFKGIENYENGDISYNSEAPIYSAKYKLKNDDYNVKELRKRYNIPTEKAPKLLLKGSGDLKGSSVGYKEIEFIFIENKKENIYFSDGLNLIPSD.

The first 16 residues, Met1–Gly16, serve as a signal peptide directing secretion. A lipid anchor (N-palmitoyl cysteine) is attached at Cys17. Cys17 carries S-diacylglycerol cysteine lipidation.

The protein belongs to the staphylococcal tandem lipoprotein family.

The protein resides in the cell membrane. This is an uncharacterized protein from Staphylococcus aureus (strain N315).